Consider the following 1288-residue polypeptide: Structural maintenance of chromosomes protein 4 (1288 aa).

Polar residues predominate over residues 1 to 10; the sequence is MPRKGTQPST. A disordered region spans residues 1–55; the sequence is MPRKGTQPSTARRREEGPPPPSPDGASSDAEPEPPSGRTESPATAAETASEELDN. Phosphoserine is present on residues Ser22 and Ser28. Thr39 carries the post-translational modification Phosphothreonine. The segment covering 39-48 has biased composition (low complexity); it reads TESPATAAET. 2 positions are modified to phosphoserine: Ser41 and Ser50. 113–120 provides a ligand contact to ATP; sequence GPNGSGKS. Ser143 carries the phosphoserine modification. The stretch at 272–588 forms a coiled coil; that stretch reads RRVEILNEHR…LFQKVEEAKS (317 aa). N6-acetyllysine occurs at positions 381 and 679. In terms of domain architecture, SMC hinge spans 613-727; the sequence is PGIYGRLGDL…ADNLDQATRV (115 aa). Residues 767–1020 adopt a coiled-coil conformation; that stretch reads LVIEISEEEV…ALSIKLKLEQ (254 aa). Residues Ser982 and Ser1056 each carry the phosphoserine modification. Residues 1109 to 1129 are a coiled coil; it reads ELDKITYERDSFRQAYEDLRK.

The protein belongs to the SMC family. SMC4 subfamily. As to quaternary structure, forms a heterodimer with SMC2. Component of the condensin complex, which contains the SMC2 and SMC4 heterodimer, and three non SMC subunits that probably regulate the complex: BRRN1/CAPH, CNAP1/CAPD2 and CAPG. As to expression, widely expressed. Higher expression in testis, colon, thymus.

The protein resides in the nucleus. It localises to the cytoplasm. Its subcellular location is the chromosome. Functionally, central component of the condensin complex, a complex required for conversion of interphase chromatin into mitotic-like condense chromosomes. The condensin complex probably introduces positive supercoils into relaxed DNA in the presence of type I topoisomerases and converts nicked DNA into positive knotted forms in the presence of type II topoisomerases. The protein is Structural maintenance of chromosomes protein 4 (SMC4) of Homo sapiens (Human).